A 418-amino-acid chain; its full sequence is Odorant receptor 13a (418 aa).

Residues 1-38 (MFYSYPYKALSFPIQCVWLKLNGSWPLTESSRPWRSQS) are Cytoplasmic-facing. A helical membrane pass occupies residues 39-59 (LLATAYIVWAWYVIASVGITI). Over 60-70 (SYQTAFLLNNL) the chain is Extracellular. Asparagine 69 carries N-linked (GlcNAc...) asparagine glycosylation. Residues 71–91 (SDIIITTENCCTTFMGVLNFV) form a helical membrane-spanning segment. Residues 92 to 140 (RLIHLRLNQRKFRQLIENFSYEIWIPNSSKNNVAAECRRRMVTFSIMTS) lie on the Cytoplasmic side of the membrane. Residues 141-161 (LLACLIIMYCVLPLVEIFFGP) form a helical membrane-spanning segment. At 162 to 195 (AFDAQNKPFPYKMIFPYDAQSSWIRYVMTYIFTS) the chain is on the extracellular side. Residues 196 to 216 (YAGICVVTTLFAEDTILGFFI) form a helical membrane-spanning segment. Residues 217–273 (TYTCGQFHLLHQRIAGLFAGSNAELAESIQLERLKRIVEKHNNIISFAKRLEDFFNP) are Cytoplasmic-facing. A helical membrane pass occupies residues 274–294 (ILLANLMISSVLICMVGFQIV). The Extracellular segment spans residues 295–299 (TGKNM). A helical membrane pass occupies residues 300–320 (FIGDYVKFIIYISSALSQLYV). Topologically, residues 321 to 385 (LCENGDALIK…PVRITAFKFS (65 aa)) are cytoplasmic. Residues 386–406 (TLSLQSFTAILSTSISYFTLL) form a helical membrane-spanning segment. The Extracellular portion of the chain corresponds to 407–418 (RSVYFDDEKKLD).

It belongs to the insect chemoreceptor superfamily. Heteromeric odorant receptor channel (TC 1.A.69) family. Or1a subfamily. Interacts with Orco. Complexes exist early in the endomembrane system in olfactory sensory neurons (OSNs), coupling these complexes to the conserved ciliary trafficking pathway. As to expression, expressed in olfactory sensory neurons in the antenna.

It localises to the cell membrane. In terms of biological role, odorant receptor which mediates acceptance or avoidance behavior, depending on its substrates. The odorant receptor repertoire encodes a large collection of odor stimuli that vary widely in identity, intensity, and duration. May form a complex with Orco to form odorant-sensing units, providing sensitive and prolonged odorant signaling and calcium permeability. Involved in the behavioral responses to octanol, nonanol, and pentyl acetate. This is Odorant receptor 13a (Or13a) from Drosophila melanogaster (Fruit fly).